The sequence spans 156 residues: UPF0460 protein in nifX 3'region (156 aa).

This sequence belongs to the UPF0460 family.

The sequence is that of UPF0460 protein in nifX 3'region from Rhodobacter capsulatus (Rhodopseudomonas capsulata).